Reading from the N-terminus, the 363-residue chain is UDP-N-acetylglucosamine--N-acetylmuramyl-(pentapeptide) pyrophosphoryl-undecaprenol N-acetylglucosamine transferase (363 aa).

Residues 14–16 (TGG), arginine 171, serine 200, and glutamine 290 contribute to the UDP-N-acetyl-alpha-D-glucosamine site.

This sequence belongs to the glycosyltransferase 28 family. MurG subfamily.

The protein resides in the cell inner membrane. It carries out the reaction di-trans,octa-cis-undecaprenyl diphospho-N-acetyl-alpha-D-muramoyl-L-alanyl-D-glutamyl-meso-2,6-diaminopimeloyl-D-alanyl-D-alanine + UDP-N-acetyl-alpha-D-glucosamine = di-trans,octa-cis-undecaprenyl diphospho-[N-acetyl-alpha-D-glucosaminyl-(1-&gt;4)]-N-acetyl-alpha-D-muramoyl-L-alanyl-D-glutamyl-meso-2,6-diaminopimeloyl-D-alanyl-D-alanine + UDP + H(+). Its pathway is cell wall biogenesis; peptidoglycan biosynthesis. In terms of biological role, cell wall formation. Catalyzes the transfer of a GlcNAc subunit on undecaprenyl-pyrophosphoryl-MurNAc-pentapeptide (lipid intermediate I) to form undecaprenyl-pyrophosphoryl-MurNAc-(pentapeptide)GlcNAc (lipid intermediate II). This Borreliella burgdorferi (strain ATCC 35210 / DSM 4680 / CIP 102532 / B31) (Borrelia burgdorferi) protein is UDP-N-acetylglucosamine--N-acetylmuramyl-(pentapeptide) pyrophosphoryl-undecaprenol N-acetylglucosamine transferase.